The primary structure comprises 418 residues: Cyclin-dependent kinase 15 (418 aa).

The 286-residue stretch at 84–369 (YLNLEKLGEG…AQDALLHPYF (286 aa)) folds into the Protein kinase domain. Residues 90–98 (LGEGTYATV) and Lys113 each bind ATP. The active-site Proton acceptor is the Asp205.

Belongs to the protein kinase superfamily. CMGC Ser/Thr protein kinase family. CDC2/CDKX subfamily. Mg(2+) serves as cofactor.

The catalysed reaction is L-seryl-[protein] + ATP = O-phospho-L-seryl-[protein] + ADP + H(+). It carries out the reaction L-threonyl-[protein] + ATP = O-phospho-L-threonyl-[protein] + ADP + H(+). In terms of biological role, serine/threonine-protein kinase involved in the control of the eukaryotic cell cycle, whose activity is controlled by an associated cyclin. In Danio rerio (Zebrafish), this protein is Cyclin-dependent kinase 15 (cdk15).